A 1323-amino-acid chain; its full sequence is Tetratricopeptide repeat protein 21 homolog (1323 aa).

TPR repeat units lie at residues 56–89, 411–444, 580–613, 667–700, 702–735, 736–768, 770–802, 804–835, 845–878, 892–925, 927–959, 961–993, 995–1027, 1031–1064, 1203–1236, 1238–1270, and 1272–1305; these read VPLA…QNFS, ESPF…LIEM, SLYH…PKKE, HQLV…QSNF, LSRI…EPTP, GSYS…QSKD, QLAE…YKDK, MRLK…EPEP, IQFL…HNKI, ARIC…YETD, KSNL…DPHN, EANL…NPLH, HALF…NPRC, AGYS…PNVV, EKCW…NCNS, RAFE…TNQK, and CSFG…NPQY.

This sequence belongs to the TTC21 family.

The sequence is that of Tetratricopeptide repeat protein 21 homolog from Caenorhabditis briggsae.